Reading from the N-terminus, the 142-residue chain is Holo-[acyl-carrier-protein] synthase (142 aa).

2 residues coordinate Mg(2+): Asp8 and Glu57.

Belongs to the P-Pant transferase superfamily. AcpS family. The cofactor is Mg(2+).

The protein localises to the cytoplasm. It carries out the reaction apo-[ACP] + CoA = holo-[ACP] + adenosine 3',5'-bisphosphate + H(+). In terms of biological role, transfers the 4'-phosphopantetheine moiety from coenzyme A to a Ser of acyl-carrier-protein. The polypeptide is Holo-[acyl-carrier-protein] synthase (Ruegeria sp. (strain TM1040) (Silicibacter sp.)).